We begin with the raw amino-acid sequence, 288 residues long: ATP synthase gamma chain (288 aa).

This sequence belongs to the ATPase gamma chain family. F-type ATPases have 2 components, CF(1) - the catalytic core - and CF(0) - the membrane proton channel. CF(1) has five subunits: alpha(3), beta(3), gamma(1), delta(1), epsilon(1). CF(0) has three main subunits: a, b and c.

It is found in the cell inner membrane. Produces ATP from ADP in the presence of a proton gradient across the membrane. The gamma chain is believed to be important in regulating ATPase activity and the flow of protons through the CF(0) complex. The protein is ATP synthase gamma chain of Aliivibrio salmonicida (strain LFI1238) (Vibrio salmonicida (strain LFI1238)).